The sequence spans 321 residues: GTP 3',8-cyclase (321 aa).

The Radical SAM core domain maps to 5-227 (SYDRVVDYLR…DEGYDGASPS (223 aa)). Arg14 lines the GTP pocket. 2 residues coordinate [4Fe-4S] cluster: Cys21 and Cys25. Residue Tyr27 participates in S-adenosyl-L-methionine binding. Residue Cys28 coordinates [4Fe-4S] cluster. Arg64 lines the GTP pocket. Gly68 contacts S-adenosyl-L-methionine. A GTP-binding site is contributed by Thr95. Position 119 (Ser119) interacts with S-adenosyl-L-methionine. Lys155 lines the GTP pocket. Position 189 (Met189) interacts with S-adenosyl-L-methionine. [4Fe-4S] cluster-binding residues include Cys249 and Cys252. 254–256 (RIR) contributes to the GTP binding site. Cys266 is a binding site for [4Fe-4S] cluster.

The protein belongs to the radical SAM superfamily. MoaA family. Monomer and homodimer. It depends on [4Fe-4S] cluster as a cofactor.

The enzyme catalyses GTP + AH2 + S-adenosyl-L-methionine = (8S)-3',8-cyclo-7,8-dihydroguanosine 5'-triphosphate + 5'-deoxyadenosine + L-methionine + A + H(+). The protein operates within cofactor biosynthesis; molybdopterin biosynthesis. Catalyzes the cyclization of GTP to (8S)-3',8-cyclo-7,8-dihydroguanosine 5'-triphosphate. This Sulfurimonas denitrificans (strain ATCC 33889 / DSM 1251) (Thiomicrospira denitrificans (strain ATCC 33889 / DSM 1251)) protein is GTP 3',8-cyclase.